The chain runs to 337 residues: Fructose-1,6-bisphosphatase class 1 (337 aa).

Mg(2+)-binding residues include Glu-94, Asp-116, Leu-118, and Asp-119. Residues 119–122, Asn-210, and Lys-276 contribute to the substrate site; that span reads DGSS. Residue Glu-282 participates in Mg(2+) binding.

It belongs to the FBPase class 1 family. In terms of assembly, homotetramer. Mg(2+) serves as cofactor.

It is found in the cytoplasm. The catalysed reaction is beta-D-fructose 1,6-bisphosphate + H2O = beta-D-fructose 6-phosphate + phosphate. Its pathway is carbohydrate biosynthesis; gluconeogenesis. This chain is Fructose-1,6-bisphosphatase class 1, found in Burkholderia cenocepacia (strain HI2424).